The primary structure comprises 283 residues: NAD kinase (283 aa).

The active-site Proton acceptor is the Asp-66. NAD(+) is bound by residues 66–67 (DG), 134–135 (ND), Arg-145, Arg-163, Asp-165, and 176–181 (TAYSMS).

This sequence belongs to the NAD kinase family. A divalent metal cation serves as cofactor.

Its subcellular location is the cytoplasm. The catalysed reaction is NAD(+) + ATP = ADP + NADP(+) + H(+). Functionally, involved in the regulation of the intracellular balance of NAD and NADP, and is a key enzyme in the biosynthesis of NADP. Catalyzes specifically the phosphorylation on 2'-hydroxyl of the adenosine moiety of NAD to yield NADP. The polypeptide is NAD kinase (Chlorobaculum tepidum (strain ATCC 49652 / DSM 12025 / NBRC 103806 / TLS) (Chlorobium tepidum)).